The primary structure comprises 376 residues: Chaperone protein DnaJ (376 aa).

The J domain occupies 5–70 (DFYEVLGVGR…DKKAAYDQFG (66 aa)). The segment at 132-210 (GLTKELRIPT…CHGEGRVEKS (79 aa)) adopts a CR-type zinc-finger fold. Zn(2+) contacts are provided by Cys145, Cys148, Cys162, Cys165, Cys184, Cys187, Cys198, and Cys201. CXXCXGXG motif repeat units lie at residues 145 to 152 (CDACDGSG), 162 to 169 (CGTCHGQG), 184 to 191 (CPTCHGRG), and 198 to 205 (CNKCHGEG).

This sequence belongs to the DnaJ family. In terms of assembly, homodimer. Zn(2+) is required as a cofactor.

The protein resides in the cytoplasm. Its function is as follows. Participates actively in the response to hyperosmotic and heat shock by preventing the aggregation of stress-denatured proteins and by disaggregating proteins, also in an autonomous, DnaK-independent fashion. Unfolded proteins bind initially to DnaJ; upon interaction with the DnaJ-bound protein, DnaK hydrolyzes its bound ATP, resulting in the formation of a stable complex. GrpE releases ADP from DnaK; ATP binding to DnaK triggers the release of the substrate protein, thus completing the reaction cycle. Several rounds of ATP-dependent interactions between DnaJ, DnaK and GrpE are required for fully efficient folding. Also involved, together with DnaK and GrpE, in the DNA replication of plasmids through activation of initiation proteins. The polypeptide is Chaperone protein DnaJ (Shewanella halifaxensis (strain HAW-EB4)).